We begin with the raw amino-acid sequence, 328 residues long: UPF0421 protein SAV1889 (328 aa).

Helical transmembrane passes span Ile19–Ile39, Leu61–Gln81, Val108–Phe128, and Thr132–Pro152.

Belongs to the UPF0421 family.

The protein localises to the cell membrane. The polypeptide is UPF0421 protein SAV1889 (Staphylococcus aureus (strain Mu50 / ATCC 700699)).